Consider the following 256-residue polypeptide: Photosystem I chlorophyll a/b-binding protein 5, chloroplastic (256 aa).

Residues 1–32 (MAVVLRGGITGGFLHHRRDASSVITRRISSVK) constitute a chloroplast transit peptide. A33 carries the N-acetylalanine modification. W49 contributes to the chlorophyll b binding site. Positions 69 and 88 each coordinate chlorophyll a. Residue R93 participates in chlorophyll b binding. A run of 2 helical transmembrane segments spans residues 94–113 (FAML…TTGI) and 129–146 (FAST…MGFA). Residues E147 and R150 each contribute to the chlorophyll b site. 6 residues coordinate chlorophyll a: K205, E206, N209, R211, Q223, and H238. The chain crosses the membrane as a helical span at residues 212–232 (LAMMAMLGFFVQASVTHTGPI).

The protein belongs to the light-harvesting chlorophyll a/b-binding (LHC) protein family. In terms of assembly, the LHC complex consists of chlorophyll a-b binding proteins. Homodimer. Heterodimer with LHCA2 and, possibly, LHCA3. Can substitute to LHCA4 to form a complex with LHCA1. Binds pigments. Element of the NAD(P)H dehydrogenase-photosystem I supercomplex (NDH-PSI). Binds at least 14 chlorophylls (8 Chl-a and 6 Chl-b) and carotenoids such as lutein and neoxanthin. is required as a cofactor. Photoregulated by reversible phosphorylation of its threonine residues.

It localises to the plastid. The protein localises to the chloroplast thylakoid membrane. Functionally, the light-harvesting complex (LHC) functions as a light receptor, it captures and delivers excitation energy to photosystems with which it is closely associated. Seems involved in the function of the photosystem I in low light conditions, when other LHCA proteins are less abundant. Required, together with LHCA6, for the formation of a full-size NAD(P)H dehydrogenase-photosystem I supercomplex (NDH-PSI) that triggers cyclic and chlororespiratory electron transport in chloroplast thylakoids, especially under stress conditions (e.g. increased light intensity). This Arabidopsis thaliana (Mouse-ear cress) protein is Photosystem I chlorophyll a/b-binding protein 5, chloroplastic.